Reading from the N-terminus, the 176-residue chain is ATP-dependent protease subunit HslV (176 aa).

The active site involves T6. Positions 161, 164, and 167 each coordinate Na(+).

It belongs to the peptidase T1B family. HslV subfamily. In terms of assembly, a double ring-shaped homohexamer of HslV is capped on each side by a ring-shaped HslU homohexamer. The assembly of the HslU/HslV complex is dependent on binding of ATP.

The protein resides in the cytoplasm. It catalyses the reaction ATP-dependent cleavage of peptide bonds with broad specificity.. With respect to regulation, allosterically activated by HslU binding. In terms of biological role, protease subunit of a proteasome-like degradation complex believed to be a general protein degrading machinery. This chain is ATP-dependent protease subunit HslV, found in Pseudothermotoga lettingae (strain ATCC BAA-301 / DSM 14385 / NBRC 107922 / TMO) (Thermotoga lettingae).